Here is a 66-residue protein sequence, read N- to C-terminus: UPF0434 protein Jann_0424 (66 aa).

Belongs to the UPF0434 family.

This Jannaschia sp. (strain CCS1) protein is UPF0434 protein Jann_0424.